Reading from the N-terminus, the 241-residue chain is Protein-L-isoaspartate O-methyltransferase (241 aa).

Residue Ser-69 is part of the active site.

Belongs to the methyltransferase superfamily. L-isoaspartyl/D-aspartyl protein methyltransferase family.

The protein resides in the cytoplasm. The catalysed reaction is [protein]-L-isoaspartate + S-adenosyl-L-methionine = [protein]-L-isoaspartate alpha-methyl ester + S-adenosyl-L-homocysteine. Catalyzes the methyl esterification of L-isoaspartyl residues in peptides and proteins that result from spontaneous decomposition of normal L-aspartyl and L-asparaginyl residues. It plays a role in the repair and/or degradation of damaged proteins. The sequence is that of Protein-L-isoaspartate O-methyltransferase from Hyperthermus butylicus (strain DSM 5456 / JCM 9403 / PLM1-5).